The following is a 623-amino-acid chain: uncharacterized protein (623 aa).

Positions 157 to 166 (LNESPLRDQQ) are enriched in basic and acidic residues. A disordered region spans residues 157–237 (LNESPLRDQQ…QGLPDHNNSI (81 aa)). The span at 167–177 (ESSTPSKNSTL) shows a compositional bias: polar residues. Positions 193 to 210 (AFRPLPSPSRRSSQSAPA) are enriched in low complexity.

This is an uncharacterized protein from Macaca fascicularis (Crab-eating macaque).